The primary structure comprises 393 residues: Protein shisa-9B (393 aa).

The N-terminal stretch at Met-1–Ala-20 is a signal peptide. Over Glu-21–Lys-131 the chain is Extracellular. The tract at residues Leu-28 to His-52 is disordered. N-linked (GlcNAc...) asparagine glycosylation occurs at Asn-38. The helical transmembrane segment at Thr-132–Phe-152 threads the bilayer. Residues Thr-153 to Val-393 lie on the Cytoplasmic side of the membrane. The tract at residues Gln-307 to Ser-340 is disordered. The segment covering Asn-310 to Ser-321 has biased composition (basic residues).

This sequence belongs to the shisa family. SHISA9 subfamily. In terms of assembly, component of some AMPA receptors (ionotropic glutamate receptors) complex.

The protein localises to the cell projection. The protein resides in the dendritic spine membrane. It localises to the synapse. In terms of biological role, regulator of short-term neuronal synaptic plasticity in the dentate gyrus. Associates with AMPA receptors (ionotropic glutamate receptors) in synaptic spines and promotes AMPA receptor desensitization at excitatory synapses. In Danio rerio (Zebrafish), this protein is Protein shisa-9B (shisa9b).